The sequence spans 960 residues: Mast/stem cell growth factor receptor Kit (960 aa).

Positions 1–24 are cleaved as a signal peptide; the sequence is MEGAHLAWELAHAVLLLSLIPAGG. At 25 to 511 the chain is on the extracellular side; it reads SVPHEESSLV…IRTHTLFTPL (487 aa). Ig-like C2-type domains lie at 27 to 102, 111 to 194, 201 to 294, 303 to 396, and 399 to 497; these read PHEE…VFVK, DSLI…LNVR, PVIT…LKAL, ATMN…VYVK, and PEIL…FNFA. Intrachain disulfides connect Cys-45/Cys-87, Cys-126/Cys-175, Cys-141/Cys-172, and Cys-222/Cys-276. Residues Asn-76, Asn-135, Asn-149, Asn-269, Asn-286, Asn-306, Asn-318, Asn-338, Asn-343, Asn-356, Asn-453, and Asn-469 are each glycosylated (N-linked (GlcNAc...) asparagine). Cys-414 and Cys-481 form a disulfide bridge. Residues 512 to 532 form a helical membrane-spanning segment; it reads LIAFGVAAGLMCIIVMILVYI. Residues 533–960 lie on the Cytoplasmic side of the membrane; sequence YLQKPKYEVQ…TQPLLVREDV (428 aa). Tyr-554 is a Mg(2+) binding site. 2 positions are modified to phosphotyrosine; by autocatalysis: Tyr-554 and Tyr-556. One can recognise a Protein kinase domain in the interval 575 to 913; sequence LSFGKTLGAG…QIVQLIEQQL (339 aa). ATP is bound by residues 582 to 589, Lys-609, and 657 to 663; these read GAGAFGKV and EYCCYGD. A phosphotyrosine; by autocatalysis mark is found at Tyr-689 and Tyr-706. Asp-777 functions as the Proton acceptor in the catalytic mechanism. Residue Arg-781 participates in ATP binding. Residues Asn-782 and Asp-795 each coordinate Mg(2+). A phosphotyrosine; by autocatalysis mark is found at Tyr-808 and Tyr-921.

It belongs to the protein kinase superfamily. Tyr protein kinase family. CSF-1/PDGF receptor subfamily. In terms of processing, ubiquitinated. KIT is rapidly ubiquitinated after autophosphorylation induced by KITLG/SCF binding, leading to internalization and degradation. Autophosphorylated on tyrosine residues. KITLG/SCF binding promotes autophosphorylation. Phosphorylated tyrosine residues are important for interaction with specific binding partners. In terms of tissue distribution, high in the brain and testes and also present in the bursa of Fabricus, heart, kidney, lung, spleen thymus and ovary.

It is found in the cell membrane. The catalysed reaction is L-tyrosyl-[protein] + ATP = O-phospho-L-tyrosyl-[protein] + ADP + H(+). Its function is as follows. Tyrosine-protein kinase that acts as a cell-surface receptor for the cytokine KITLG/SCF and plays an essential role in the regulation of cell survival and proliferation, hematopoiesis, stem cell maintenance, gametogenesis, mast cell development, migration and function, and in melanogenesis. In response to KITLG/SCF binding, KIT can activate several signaling pathways. Promotes phosphorylation of PIK3R1, the regulatory subunit of phosphatidylinositol 3-kinase, and subsequent activation of the kinase AKT1. Activated KIT also transmits signals via GRB2 and activation of RAS, RAF1 and the MAP kinases MAPK1/ERK2 and/or MAPK3/ERK1. Promotes activation of STAT family members STAT1, STAT3, STAT5A and STAT5B. KIT promotes activation of PLCG1, leading to the production of the cellular signaling molecules diacylglycerol and inositol 1,4,5-trisphosphate. KIT signaling is modulated by protein phosphatases, and by rapid internalization and degradation of the receptor. This chain is Mast/stem cell growth factor receptor Kit (KIT), found in Gallus gallus (Chicken).